Here is a 900-residue protein sequence, read N- to C-terminus: Alanine--tRNA ligase (900 aa).

Zn(2+) contacts are provided by histidine 604, histidine 608, cysteine 708, and histidine 712.

This sequence belongs to the class-II aminoacyl-tRNA synthetase family. The cofactor is Zn(2+).

Its subcellular location is the cytoplasm. It carries out the reaction tRNA(Ala) + L-alanine + ATP = L-alanyl-tRNA(Ala) + AMP + diphosphate. Functionally, catalyzes the attachment of alanine to tRNA(Ala) in a two-step reaction: alanine is first activated by ATP to form Ala-AMP and then transferred to the acceptor end of tRNA(Ala). Also edits incorrectly charged Ser-tRNA(Ala) and Gly-tRNA(Ala) via its editing domain. The chain is Alanine--tRNA ligase from Saccharolobus islandicus (strain Y.G.57.14 / Yellowstone #1) (Sulfolobus islandicus).